Here is a 423-residue protein sequence, read N- to C-terminus: Putative competence-damage inducible protein (423 aa).

This sequence belongs to the CinA family.

This is Putative competence-damage inducible protein from Streptococcus thermophilus (strain ATCC BAA-491 / LMD-9).